The chain runs to 65 residues: Muscarinic toxin-like protein 3 (65 aa).

Disulfide bonds link cysteine 3–cysteine 24, cysteine 17–cysteine 41, cysteine 45–cysteine 57, and cysteine 58–cysteine 63.

In terms of assembly, homodimer; non-covalently linked. Expressed by the venom gland.

Its subcellular location is the secreted. Its function is as follows. Antagonist of muscle and neuronal nicotinic acetylcholine receptors (nAChR) with highest affinity for neuronal alpha-7/CHRNA7 nAChRs. In Naja kaouthia (Monocled cobra), this protein is Muscarinic toxin-like protein 3.